A 700-amino-acid chain; its full sequence is non-specific serine/threonine protein kinase Cdc7 (700 aa).

The Protein kinase domain maps to 127–644 (FDVHSRIGNG…AEEALKHPFF (518 aa)). ATP is bound by residues 133–141 (IGNGTFSTV) and Lys-163. The active-site Proton acceptor is Asp-250.

Belongs to the protein kinase superfamily. Ser/Thr protein kinase family. Component of the Dbf4-dependent kinase (DDK) complex consisting of Cdc7 and the Dbf4 ortholog chif. Interacts with chif (via the processed polypeptide Chiffon-A); the interaction is direct.

It catalyses the reaction L-seryl-[protein] + ATP = O-phospho-L-seryl-[protein] + ADP + H(+). The catalysed reaction is L-threonyl-[protein] + ATP = O-phospho-L-threonyl-[protein] + ADP + H(+). With respect to regulation, activated by chif. Inhibited by the synthetic compound XL413. Functionally, catalytic component of the Dbf4-dependent kinase (DDK) complex. Phosphorylates components of the pre-replication complex, including Mcm2 and, to a lesser extent, Mcm4. Phosphorylates histones, including H3 and H2B. Required for DNA replication and mitotic proliferation, including during the endoreplication and amplification stages of DNA replication in egg chamber follicle cells of the ovary. In Drosophila melanogaster (Fruit fly), this protein is non-specific serine/threonine protein kinase Cdc7.